The primary structure comprises 82 residues: Small ribosomal subunit protein bS18 (82 aa).

Positions 1 to 20 are disordered; that stretch reads MSEINQTVTRRPFHRRRKTC.

Belongs to the bacterial ribosomal protein bS18 family. As to quaternary structure, part of the 30S ribosomal subunit. Forms a tight heterodimer with protein bS6.

Functionally, binds as a heterodimer with protein bS6 to the central domain of the 16S rRNA, where it helps stabilize the platform of the 30S subunit. The polypeptide is Small ribosomal subunit protein bS18 (Bartonella quintana (strain Toulouse) (Rochalimaea quintana)).